Consider the following 222-residue polypeptide: ATP synthase F(0) complex subunit a (222 aa).

6 helical membrane-spanning segments follow: residues 7–27, 64–84, 93–113, 132–152, 160–180, and 197–219; these read AFFD…AILL, WSLM…LGLL, QLTV…VLGF, FLIP…PITL, ITAG…LLSV, and ILEL…LYLH.

Belongs to the ATPase A chain family. Component of the ATP synthase complex composed at least of ATP5F1A/subunit alpha, ATP5F1B/subunit beta, ATP5MC1/subunit c (homooctomer), MT-ATP6/subunit a, MT-ATP8/subunit 8, ATP5ME/subunit e, ATP5MF/subunit f, ATP5MG/subunit g, ATP5MK/subunit k, ATP5MJ/subunit j, ATP5F1C/subunit gamma, ATP5F1D/subunit delta, ATP5F1E/subunit epsilon, ATP5PF/subunit F6, ATP5PB/subunit b, ATP5PD/subunit d, ATP5PO/subunit OSCP. ATP synthase complex consists of a soluble F(1) head domain (subunits alpha(3) and beta(3)) - the catalytic core - and a membrane F(0) domain - the membrane proton channel (subunits c, a, 8, e, f, g, k and j). These two domains are linked by a central stalk (subunits gamma, delta, and epsilon) rotating inside the F1 region and a stationary peripheral stalk (subunits F6, b, d, and OSCP). Interacts with DNAJC30; interaction is direct.

It localises to the mitochondrion inner membrane. It carries out the reaction H(+)(in) = H(+)(out). Functionally, subunit a, of the mitochondrial membrane ATP synthase complex (F(1)F(0) ATP synthase or Complex V) that produces ATP from ADP in the presence of a proton gradient across the membrane which is generated by electron transport complexes of the respiratory chain. ATP synthase complex consist of a soluble F(1) head domain - the catalytic core - and a membrane F(1) domain - the membrane proton channel. These two domains are linked by a central stalk rotating inside the F(1) region and a stationary peripheral stalk. During catalysis, ATP synthesis in the catalytic domain of F(1) is coupled via a rotary mechanism of the central stalk subunits to proton translocation. With the subunit c (ATP5MC1), forms the proton-conducting channel in the F(0) domain, that contains two crucial half-channels (inlet and outlet) that facilitate proton movement from the mitochondrial intermembrane space (IMS) into the matrix. Protons are taken up via the inlet half-channel and released through the outlet half-channel, following a Grotthuss mechanism. In Elephas maximus (Indian elephant), this protein is ATP synthase F(0) complex subunit a.